The chain runs to 117 residues: DNA-binding protein MK1619 (117 aa).

The protein belongs to the PDCD5 family.

The chain is DNA-binding protein MK1619 from Methanopyrus kandleri (strain AV19 / DSM 6324 / JCM 9639 / NBRC 100938).